We begin with the raw amino-acid sequence, 154 residues long: NADPH-dependent 7-cyano-7-deazaguanine reductase (154 aa).

Cysteine 52 functions as the Thioimide intermediate in the catalytic mechanism. The active-site Proton donor is aspartate 59. Substrate is bound by residues 74 to 76 and 93 to 94; these read VES and HE.

The protein belongs to the GTP cyclohydrolase I family. QueF type 1 subfamily.

Its subcellular location is the cytoplasm. The catalysed reaction is 7-aminomethyl-7-carbaguanine + 2 NADP(+) = 7-cyano-7-deazaguanine + 2 NADPH + 3 H(+). It participates in tRNA modification; tRNA-queuosine biosynthesis. Its function is as follows. Catalyzes the NADPH-dependent reduction of 7-cyano-7-deazaguanine (preQ0) to 7-aminomethyl-7-deazaguanine (preQ1). This Ruegeria sp. (strain TM1040) (Silicibacter sp.) protein is NADPH-dependent 7-cyano-7-deazaguanine reductase.